The following is a 78-amino-acid chain: UPF0612 protein new22 (78 aa).

Belongs to the UPF0612 family.

The polypeptide is UPF0612 protein new22 (new22) (Schizosaccharomyces pombe (strain 972 / ATCC 24843) (Fission yeast)).